The primary structure comprises 708 residues: uncharacterized protein (708 aa).

Disordered regions lie at residues 1–79 (MHAR…RRSS), 119–301 (AGEF…IHQR), 349–390 (YLSH…GDEN), and 410–461 (SNSF…KRQR). The span at 65–74 (LPPPLPPPPV) shows a compositional bias: pro residues. Residues 238–249 (DEAQSKTGSSSA) show a composition bias toward polar residues. Low complexity predominate over residues 260–274 (SKVSEGSSSLSAGSG). Over residues 410–419 (SNSFPSSILR) the composition is skewed to polar residues. Residues 442–461 (VGEKRPGEGSDLEEGSKRQR) are compositionally biased toward basic and acidic residues.

This is an uncharacterized protein from Arabidopsis thaliana (Mouse-ear cress).